The primary structure comprises 285 residues: MATIIDGKAIAEKIRADLAAQVKELQSRGITPGLATVLVGSDPASEVYVRMKGDACNKLGMHSVKITRPAETTEEELLALINELNNDPAIHGILVQLPLPPQINADRVLEAISPAKDVDGFHPYNVGRLVTGKPTFQPCTPYGVMVMLQEAGVDLAGKEVVVVGRSNIVGKPVALMCLQRNATVTICHSKTRDLPGRVRAADVVIAAVGVPEMIKGDWIKEGAVVIDVGVNRVGEKKLVGDVEFAAAAERASAITPVPGGVGPMTITMLLHNTLEAAKMAGSGNR.

NADP(+)-binding positions include 164 to 166 (GRS), Ser189, and Val230.

It belongs to the tetrahydrofolate dehydrogenase/cyclohydrolase family. Homodimer.

It catalyses the reaction (6R)-5,10-methylene-5,6,7,8-tetrahydrofolate + NADP(+) = (6R)-5,10-methenyltetrahydrofolate + NADPH. The catalysed reaction is (6R)-5,10-methenyltetrahydrofolate + H2O = (6R)-10-formyltetrahydrofolate + H(+). The protein operates within one-carbon metabolism; tetrahydrofolate interconversion. Its function is as follows. Catalyzes the oxidation of 5,10-methylenetetrahydrofolate to 5,10-methenyltetrahydrofolate and then the hydrolysis of 5,10-methenyltetrahydrofolate to 10-formyltetrahydrofolate. This is Bifunctional protein FolD 2 from Geobacter sulfurreducens (strain ATCC 51573 / DSM 12127 / PCA).